A 374-amino-acid polypeptide reads, in one-letter code: Peptide chain release factor 2 (374 aa).

Glutamine 249 is modified (N5-methylglutamine).

It belongs to the prokaryotic/mitochondrial release factor family. Methylated by PrmC. Methylation increases the termination efficiency of RF2.

The protein localises to the cytoplasm. Peptide chain release factor 2 directs the termination of translation in response to the peptide chain termination codons UGA and UAA. In Ruegeria sp. (strain TM1040) (Silicibacter sp.), this protein is Peptide chain release factor 2.